Reading from the N-terminus, the 403-residue chain is Phosphopentomutase (403 aa).

Mn(2+) is bound by residues aspartate 13, aspartate 298, histidine 303, aspartate 339, histidine 340, and histidine 351.

This sequence belongs to the phosphopentomutase family. Mn(2+) serves as cofactor.

Its subcellular location is the cytoplasm. The catalysed reaction is 2-deoxy-alpha-D-ribose 1-phosphate = 2-deoxy-D-ribose 5-phosphate. It carries out the reaction alpha-D-ribose 1-phosphate = D-ribose 5-phosphate. The protein operates within carbohydrate degradation; 2-deoxy-D-ribose 1-phosphate degradation; D-glyceraldehyde 3-phosphate and acetaldehyde from 2-deoxy-alpha-D-ribose 1-phosphate: step 1/2. In terms of biological role, isomerase that catalyzes the conversion of deoxy-ribose 1-phosphate (dRib-1-P) and ribose 1-phosphate (Rib-1-P) to deoxy-ribose 5-phosphate (dRib-5-P) and ribose 5-phosphate (Rib-5-P), respectively. The sequence is that of Phosphopentomutase from Streptococcus equi subsp. zooepidemicus (strain MGCS10565).